The primary structure comprises 273 residues: Eukaryotic translation initiation factor 3 subunit G-2 (273 aa).

One can recognise an RRM domain in the interval 193 to 271 (SAVRISNLSE…LILCVEWSKP (79 aa)).

The protein belongs to the eIF-3 subunit G family. As to quaternary structure, component of the eukaryotic translation initiation factor 3 (eIF-3) complex. The eIF-3 complex interacts with pix.

The protein localises to the cytoplasm. Functionally, RNA-binding component of the eukaryotic translation initiation factor 3 (eIF-3) complex, which is involved in protein synthesis of a specialized repertoire of mRNAs and, together with other initiation factors, stimulates binding of mRNA and methionyl-tRNAi to the 40S ribosome. The eIF-3 complex specifically targets and initiates translation of a subset of mRNAs involved in cell proliferation. This subunit can bind 18S rRNA. The polypeptide is Eukaryotic translation initiation factor 3 subunit G-2 (Drosophila simulans (Fruit fly)).